The primary structure comprises 468 residues: Eukaryotic translation initiation factor 3 subunit M (468 aa).

The disordered stretch occupies residues proline 42–glutamine 61. The PCI domain maps to aspartate 206–tyrosine 377. Positions methionine 418–glutamate 468 are disordered. Over residues serine 430–arginine 442 the composition is skewed to basic and acidic residues. A compositionally biased stretch (low complexity) spans proline 444–glutamine 457.

The protein belongs to the eIF-3 subunit M family. In terms of assembly, component of the eukaryotic translation initiation factor 3 (eIF-3) complex.

The protein localises to the cytoplasm. Functionally, component of the eukaryotic translation initiation factor 3 (eIF-3) complex, which is involved in protein synthesis of a specialized repertoire of mRNAs and, together with other initiation factors, stimulates binding of mRNA and methionyl-tRNAi to the 40S ribosome. The eIF-3 complex specifically targets and initiates translation of a subset of mRNAs involved in cell proliferation. The sequence is that of Eukaryotic translation initiation factor 3 subunit M from Neosartorya fischeri (strain ATCC 1020 / DSM 3700 / CBS 544.65 / FGSC A1164 / JCM 1740 / NRRL 181 / WB 181) (Aspergillus fischerianus).